Reading from the N-terminus, the 198-residue chain is Large ribosomal subunit protein eL19 (198 aa).

2 disordered regions span residues Y66 to A85 and K150 to Q177. Over residues R71 to G83 the composition is skewed to basic residues. Basic and acidic residues predominate over residues Q160–Q177.

Belongs to the eukaryotic ribosomal protein eL19 family.

This chain is Large ribosomal subunit protein eL19 (rpl-19), found in Caenorhabditis elegans.